We begin with the raw amino-acid sequence, 95 residues long: MAISKSEVEYIAKLARLKFTEEEIEAMAQELSKILDYVNKLNELDTENVEPTAHIVPIHNVFREDEVKPSMPREKVLMNAPFTEQGCFKVPKIIE.

The protein belongs to the GatC family. Heterotrimer of A, B and C subunits.

It carries out the reaction L-glutamyl-tRNA(Gln) + L-glutamine + ATP + H2O = L-glutaminyl-tRNA(Gln) + L-glutamate + ADP + phosphate + H(+). The enzyme catalyses L-aspartyl-tRNA(Asn) + L-glutamine + ATP + H2O = L-asparaginyl-tRNA(Asn) + L-glutamate + ADP + phosphate + 2 H(+). Its function is as follows. Allows the formation of correctly charged Asn-tRNA(Asn) or Gln-tRNA(Gln) through the transamidation of misacylated Asp-tRNA(Asn) or Glu-tRNA(Gln) in organisms which lack either or both of asparaginyl-tRNA or glutaminyl-tRNA synthetases. The reaction takes place in the presence of glutamine and ATP through an activated phospho-Asp-tRNA(Asn) or phospho-Glu-tRNA(Gln). The chain is Aspartyl/glutamyl-tRNA(Asn/Gln) amidotransferase subunit C from Caldanaerobacter subterraneus subsp. tengcongensis (strain DSM 15242 / JCM 11007 / NBRC 100824 / MB4) (Thermoanaerobacter tengcongensis).